Reading from the N-terminus, the 346-residue chain is Probable RNA methyltransferase PA14_40730 (346 aa).

Glu91 acts as the Proton acceptor in catalysis. The Radical SAM core domain occupies 94–320 (LLPRGGLCVS…TKVRNSAGQD (227 aa)). Cys101 and Cys325 are disulfide-bonded. Cys108, Cys112, and Cys115 together coordinate [4Fe-4S] cluster. Residues 153–154 (GE), Ser183, 206–208 (SLH), and Asn282 contribute to the S-adenosyl-L-methionine site. Residue Cys325 is the S-methylcysteine intermediate of the active site.

The protein belongs to the radical SAM superfamily. RlmN family. Requires [4Fe-4S] cluster as cofactor.

Its subcellular location is the cytoplasm. The protein is Probable RNA methyltransferase PA14_40730 of Pseudomonas aeruginosa (strain UCBPP-PA14).